Consider the following 217-residue polypeptide: NADH dehydrogenase (ubiquinone) 23 kDa subunit (217 aa).

Residues 1–26 (MSLTMRIFTASRNGQRLFGSHGARLL) constitute a mitochondrion transit peptide. 2 consecutive 4Fe-4S ferredoxin-type domains span residues 109 to 138 (RRYP…IEAE) and 148 to 177 (TRYD…EGPN). 8 residues coordinate [4Fe-4S] cluster: Cys-118, Cys-121, Cys-124, Cys-128, Cys-157, Cys-160, Cys-163, and Cys-167.

Belongs to the complex I 23 kDa subunit family. As to quaternary structure, part of the mitochondrial membrane respiratory chain NADH dehydrogenase (Complex I). This is a component of the iron-sulfur (IP) fragment of the enzyme. It depends on [4Fe-4S] cluster as a cofactor. In terms of tissue distribution, expressed in muscles (at protein level).

It is found in the mitochondrion. It catalyses the reaction a ubiquinone + NADH + 5 H(+)(in) = a ubiquinol + NAD(+) + 4 H(+)(out). In terms of biological role, core subunit of the mitochondrial membrane respiratory chain NADH dehydrogenase (Complex I) that is believed to belong to the minimal assembly required for catalysis. Complex I functions in the transfer of electrons from NADH to the respiratory chain. The immediate electron acceptor for the enzyme is believed to be ubiquinone. The sequence is that of NADH dehydrogenase (ubiquinone) 23 kDa subunit from Drosophila melanogaster (Fruit fly).